Reading from the N-terminus, the 628-residue chain is E3 SUMO-protein ligase PIAS3 (628 aa).

Positions 1-200 (MAELGELKHM…QLRFCLCETS (200 aa)) are interaction with CCAR2. Residues 11-45 (VMSFRVSELQVLLGFAGRNKSGRKHELLAKALHLL) enclose the SAP domain. The LXXLL motif motif lies at 19 to 23 (LQVLL). Residues Lys46, Lys56, Lys230, and Lys307 each participate in a glycyl lysine isopeptide (Lys-Gly) (interchain with G-Cter in SUMO2) cross-link. One can recognise a PINIT domain in the interval 115–280 (MHPPLPQPVH…SLSVYLVRQL (166 aa)). An SP-RING-type zinc finger spans residues 312–393 (PDSEVATTSL…FMEILSSCSD (82 aa)). Residues Cys343, His345, Cys366, and Cys369 each contribute to the Zn(2+) site. The segment at 450–460 (LTIESSSDEED) is SUMO1-binding. Residues Lys466 and Lys482 each participate in a glycyl lysine isopeptide (Lys-Gly) (interchain with G-Cter in SUMO2) cross-link. The interval 597–617 (VAPGGALREGHGGPLPSGPSL) is disordered.

It belongs to the PIAS family. Monomer. Binds SUMO1 and UBE2I. Interacts with BCL11A, HMGA2, IRF1, MITF and NCOA2. Interacts with STAT5; the interaction occurs on stimulation by PRL. Interacts with GFI1; the interaction relieves the inhibitory effect of PIAS3 on STAT3-mediated transcriptional activity. Interacts with AR, PLAG1 and ZFHX3. Interacts with STAT3; the interaction occurs on stimulation by IL6, CNTF or OSM and inhibits the DNA binding activity of STAT3. Interacts with MTA1. Interacts with CCAR2 (via N-terminus). Interacts with TRIM8. Interacts with PRDM1/Blimp-1. Sumoylated. Widely expressed.

The protein resides in the cytoplasm. It localises to the nucleus. It is found in the nucleus speckle. Its pathway is protein modification; protein sumoylation. In terms of biological role, functions as an E3-type small ubiquitin-like modifier (SUMO) ligase, stabilizing the interaction between UBE2I and the substrate, and as a SUMO-tethering factor. Plays a crucial role as a transcriptional coregulation in various cellular pathways, including the STAT pathway and the steroid hormone signaling pathway. Involved in regulating STAT3 signaling via inhibiting STAT3 DNA-binding and suppressing cell growth. Enhances the sumoylation of MTA1 and may participate in its paralog-selective sumoylation. Sumoylates CCAR2 which promotes its interaction with SIRT1. Diminishes the sumoylation of ZFHX3 by preventing the colocalization of ZFHX3 with SUMO1 in the nucleus. The chain is E3 SUMO-protein ligase PIAS3 (PIAS3) from Homo sapiens (Human).